The primary structure comprises 287 residues: Orotidine 5'-phosphate decarboxylase (287 aa).

The active-site Proton donor is K99.

It belongs to the OMP decarboxylase family. Type 2 subfamily.

The catalysed reaction is orotidine 5'-phosphate + H(+) = UMP + CO2. It participates in pyrimidine metabolism; UMP biosynthesis via de novo pathway; UMP from orotate: step 2/2. The sequence is that of Orotidine 5'-phosphate decarboxylase from Clostridium novyi (strain NT).